Here is a 188-residue protein sequence, read N- to C-terminus: Ion-translocating oxidoreductase complex subunit B (188 aa).

The segment at 1–23 is hydrophobic; that stretch reads MIEAAVSMSALGLGLGLLLGVAA. The 60-residue stretch at 29–88 folds into the 4Fe-4S domain; sequence ESPPIVDAIEGILPGTNCGACGYPGCRGLAEAMSEGAAPVTACAPGGRDVALALAAIVET. Cys46, Cys49, Cys54, Cys71, Cys113, Cys116, Cys119, Cys123, Cys143, Cys146, Cys149, and Cys153 together coordinate [4Fe-4S] cluster. 2 consecutive 4Fe-4S ferredoxin-type domains span residues 104-133 and 134-163; these read TVAF…GANR and QIHT…ARVK.

This sequence belongs to the 4Fe4S bacterial-type ferredoxin family. RnfB subfamily. The complex is composed of six subunits: RnfA, RnfB, RnfC, RnfD, RnfE and RnfG. The cofactor is [4Fe-4S] cluster.

The protein resides in the cellular chromatophore membrane. In terms of biological role, part of a membrane-bound complex that couples electron transfer with translocation of ions across the membrane. In Cereibacter sphaeroides (strain ATCC 17023 / DSM 158 / JCM 6121 / CCUG 31486 / LMG 2827 / NBRC 12203 / NCIMB 8253 / ATH 2.4.1.) (Rhodobacter sphaeroides), this protein is Ion-translocating oxidoreductase complex subunit B.